The following is a 190-amino-acid chain: Probable RNA-binding protein 18 (190 aa).

An RRM domain is found at 25-106 (HRLWIGNLDP…KKLVVRWAHA (82 aa)). Residues 166–190 (VYSYFKPPDKKRTTPYSRTAWKSRR) are disordered.

This Pongo abelii (Sumatran orangutan) protein is Probable RNA-binding protein 18 (RBM18).